The sequence spans 461 residues: Type IV secretion system protein PtlD homolog (461 aa).

The N-terminal stretch at 1 to 24 (MAGLSRILLSCTLACLLAGQAAQA) is a signal peptide. Transmembrane regions (helical) follow at residues 118-138 (LQPL…YALL), 232-252 (WLLC…LAAS), 253-273 (LLIV…LFLV), 294-314 (ALVF…VLAG), and 333-353 (MLAA…VPLA). The segment covering 376 to 411 (AHRQAAARQYAPRPAAAAAAAGPHQAGTYAASATPA) has biased composition (low complexity). Residues 376 to 461 (AHRQAAARQY…RVLPRKPNLP (86 aa)) are disordered. A compositionally biased stretch (basic and acidic residues) spans 439–453 (VRRDDRPAPAPDRRV).

It is found in the cell membrane. This Bordetella bronchiseptica (strain ATCC BAA-588 / NCTC 13252 / RB50) (Alcaligenes bronchisepticus) protein is Type IV secretion system protein PtlD homolog (ptlD).